The primary structure comprises 77 residues: MAEVFDRVKEIIIDRLDVEESKVTMEASFKDDLDADSLDVVELVMELEDEFDMEIADEDAEKINTVGDAVDYINSKA.

Residues 2-77 (AEVFDRVKEI…DAVDYINSKA (76 aa)) enclose the Carrier domain. S37 is modified (O-(pantetheine 4'-phosphoryl)serine).

This sequence belongs to the acyl carrier protein (ACP) family. In terms of processing, 4'-phosphopantetheine is transferred from CoA to a specific serine of apo-ACP by AcpS. This modification is essential for activity because fatty acids are bound in thioester linkage to the sulfhydryl of the prosthetic group.

The protein localises to the cytoplasm. It functions in the pathway lipid metabolism; fatty acid biosynthesis. Its function is as follows. Carrier of the growing fatty acid chain in fatty acid biosynthesis. The protein is Acyl carrier protein of Oceanobacillus iheyensis (strain DSM 14371 / CIP 107618 / JCM 11309 / KCTC 3954 / HTE831).